The sequence spans 233 residues: Protein Atu3128 (233 aa).

The protein belongs to the glycosyl hydrolase 88 family.

Functionally, seems to regulate the surface properties of the bacterium in the presence of plant cells or plant cell extracts. Mutations in this protein are responsible for an increased aggregation of the bacteria in the presence of pea root cap cells. This chain is Protein Atu3128, found in Agrobacterium fabrum (strain C58 / ATCC 33970) (Agrobacterium tumefaciens (strain C58)).